Here is a 102-residue protein sequence, read N- to C-terminus: QLAEQYPPHPYSFSYDATDETGARISTSESGDESNSKTGSYSYQTPDGVYRTVNYVADATGFHASIDTNEPGTKSEAPADVTINANPIEVKEAYAFKAKSAA.

Q1 is subject to Pyrrolidone carboxylic acid. The interval 1 to 45 (QLAEQYPPHPYSFSYDATDETGARISTSESGDESNSKTGSYSYQT) is disordered. The Chitin-binding type R&amp;R domain maps to 8-74 (PHPYSFSYDA…SIDTNEPGTK (67 aa)). The span at 36–45 (SKTGSYSYQT) shows a compositional bias: polar residues.

Component of the cuticle of the tick. Binds chitin. In Ixodes ricinus (Common tick), this protein is Cuticle protein 10.9.